The chain runs to 219 residues: ATP synthase delta chain, chloroplastic (219 aa).

The N-terminal 33 residues, 1-33 (MLAAKSIAGPRAFKASAVRAAPKAGRRTVVVMA), are a transit peptide targeting the chloroplast.

It belongs to the ATPase delta chain family. In terms of assembly, F-type ATPases have 2 components, F(1) - the catalytic core - and F(0) - the membrane proton channel. F(1) has five subunits: alpha(3), beta(3), gamma(1), delta(1), epsilon(1). F(0) has four main subunits: a(1), b(1), b'(1) and c(10-14). The alpha and beta chains form an alternating ring which encloses part of the gamma chain. F(1) is attached to F(0) by a central stalk formed by the gamma and epsilon chains, while a peripheral stalk is formed by the delta, b and b' chains.

It is found in the plastid. It localises to the chloroplast thylakoid membrane. In terms of biological role, f(1)F(0) ATP synthase produces ATP from ADP in the presence of a proton or sodium gradient. F-type ATPases consist of two structural domains, F(1) containing the extramembraneous catalytic core and F(0) containing the membrane proton channel, linked together by a central stalk and a peripheral stalk. During catalysis, ATP synthesis in the catalytic domain of F(1) is coupled via a rotary mechanism of the central stalk subunits to proton translocation. This protein seems to be part of the stalk that links CF(0) to CF(1). It either transmits conformational changes from CF(0) into CF(1) or is implicated in proton conduction. In Chlamydomonas reinhardtii (Chlamydomonas smithii), this protein is ATP synthase delta chain, chloroplastic.